Consider the following 608-residue polypeptide: UvrABC system protein C (608 aa).

Positions 16 to 94 constitute a GIY-YIG domain; sequence NRPGVYRMFD…IKEWRPPYNI (79 aa). The region spanning 204 to 239 is the UVR domain; the sequence is NALADELNTGMEQAAMRLDFEKAAELRDQVAILRRV.

The protein belongs to the UvrC family. In terms of assembly, interacts with UvrB in an incision complex.

The protein localises to the cytoplasm. Its function is as follows. The UvrABC repair system catalyzes the recognition and processing of DNA lesions. UvrC both incises the 5' and 3' sides of the lesion. The N-terminal half is responsible for the 3' incision and the C-terminal half is responsible for the 5' incision. This chain is UvrABC system protein C, found in Pseudomonas paraeruginosa (strain DSM 24068 / PA7) (Pseudomonas aeruginosa (strain PA7)).